Consider the following 377-residue polypeptide: Apelin receptor (377 aa).

Residues 1-28 are Extracellular-facing; sequence MEDDGYNYYGADNQSECDYADWTPSGAL. N-linked (GlcNAc...) asparagine glycosylation is present at Asn-13. Cystine bridges form between Cys-17–Cys-279 and Cys-100–Cys-179. Residues 29–52 traverse the membrane as a helical segment; that stretch reads IPAIYILVFLLGTTGNGLVLWTVF. Topologically, residues 53–62 are cytoplasmic; it reads WSSREKRRSA. The helical transmembrane segment at 63-84 threads the bilayer; the sequence is DIFIASLAVADLTFVVTLPLWA. The Extracellular segment spans residues 85–97; the sequence is TYTYREFDWPFGT. Residues 98–123 traverse the membrane as a helical segment; sequence FSCKLSSYLIFVNMYASVFCLTGLSF. At 124-144 the chain is on the cytoplasmic side; the sequence is DRYLAIVRPVANARLRLRVSG. Residues 145–162 traverse the membrane as a helical segment; sequence AVATAVLWVLAALLAVPV. Over 163-196 the chain is Extracellular; that stretch reads MVFRSTDIPENSTKTQCYMDYSMVATSNSEWAWE. Asn-173 is a glycosylation site (N-linked (GlcNAc...) asparagine). Residues 197–221 form a helical membrane-spanning segment; it reads VGLGVSSTAVGFVVPFIIMLTCYFF. Residues 222–244 lie on the Cytoplasmic side of the membrane; the sequence is IAQTIAGHFRKERIEGLRKRRRL. Residues 245–268 traverse the membrane as a helical segment; it reads LSIIVVLVVTFALCWMPYHLVKTL. The Extracellular segment spans residues 269-287; sequence YMLGNLLHWPCDFDSFLMN. The chain crosses the membrane as a helical span at residues 288 to 310; that stretch reads VFPYCTCISYVNSCLNPFLYAFF. The Cytoplasmic portion of the chain corresponds to 311-377; the sequence is DPRFRRACTS…IPYSQETLVD (67 aa). Over residues 335-349 the composition is skewed to low complexity; the sequence is SSSAEKSASYSSGHS. A disordered region spans residues 335-377; that stretch reads SSSAEKSASYSSGHSQGPGPNMCKGGEPMHEKSIPYSQETLVD.

Belongs to the G-protein coupled receptor 1 family. In terms of assembly, homodimer; dimerization inhibits APLNR-mediated G protein and beta-arrestin signaling pathways compared to monomeric APLNR. In terms of tissue distribution, widely expressed. Highest expression in the lung, lower in the heart, placenta, ovary, skeletal muscle, mammary gland, kidney and several structures in the brain as the hypothalamus (supraoptic and periventricular nuclei), pituitary, olfactory bulb and pineal gland.

It is found in the cell membrane. G protein-coupled receptor for peptide hormones apelin (APLN) and apelin receptor early endogenous ligand (APELA/ELA), that plays a role in the regulation of normal cardiovascular function and fluid homeostasis. When acting as apelin receptor, activates both G(i) protein pathway that inhibits adenylate cyclase activity, and the beta-arrestin pathway that promotes internalization of the receptor. APLNR/APJ also functions as mechanoreceptor that is activated by pathological stimuli in a G-protein-independent fashion to induce beta-arrestin signaling, hence eliciting cardiac hypertrophy. However, the presence of apelin ligand blunts cardiac hypertrophic induction from APLNR/APJ on response to pathological stimuli. Plays a key role in early development such as gastrulation, blood vessels formation and heart morphogenesis by acting as a APELA receptor. May promote angioblast migration toward the embryonic midline, i.e. the position of the future vessel formation, during vasculogenesis. Promotes sinus venosus (SV)-derived endothelial cells migration into the developing heart to promote coronary blood vessel development. Also plays a role in various processes in adults such as regulation of blood vessel formation, blood pressure, heart contractility and heart failure. This Rattus norvegicus (Rat) protein is Apelin receptor.